The sequence spans 37 residues: Large ribosomal subunit protein bL36c (37 aa).

It belongs to the bacterial ribosomal protein bL36 family.

The protein resides in the plastid. The protein is Large ribosomal subunit protein bL36c of Cuscuta exaltata (Tall dodder).